We begin with the raw amino-acid sequence, 439 residues long: Adenylosuccinate synthetase (439 aa).

GTP is bound by residues 14–20 (GDEGKGK) and 42–44 (GHT). The Proton acceptor role is filled by D15. Mg(2+) is bound by residues D15 and G42. IMP contacts are provided by residues 15–18 (DEGK), 40–43 (NAGH), T130, R144, Q225, T240, and R304. The Proton donor role is filled by H43. 300 to 306 (TTTGRRR) contacts substrate. GTP-binding positions include R306, 332–334 (KLD), and 414–416 (SLG).

This sequence belongs to the adenylosuccinate synthetase family. Homodimer. The cofactor is Mg(2+).

The protein resides in the cytoplasm. It catalyses the reaction IMP + L-aspartate + GTP = N(6)-(1,2-dicarboxyethyl)-AMP + GDP + phosphate + 2 H(+). The protein operates within purine metabolism; AMP biosynthesis via de novo pathway; AMP from IMP: step 1/2. Plays an important role in the de novo pathway of purine nucleotide biosynthesis. Catalyzes the first committed step in the biosynthesis of AMP from IMP. The polypeptide is Adenylosuccinate synthetase (Prochlorococcus marinus (strain MIT 9303)).